The primary structure comprises 224 residues: Non-structural protein 3 (224 aa).

A CoV 3a-like viroporin TM domain is found at 34 to 124 (NVVPIRQASN…RYKNALFIIF (91 aa)). Transmembrane regions (helical) follow at residues 40 to 60 (QASNVTGFLFTSVFVYFFALF), 69 to 88 (YIMLAARFAVVFLYCPLLYY), and 95 to 111 (ATIICCALIGRLCLVCF). In terms of domain architecture, CoV 3a-like viroporin CD spans 128 to 203 (TLSFLNGKAA…KLYVFSQHQI (76 aa)).

Its subcellular location is the host membrane. The chain is Non-structural protein 3 from Sus scrofa (Pig).